The following is a 219-amino-acid chain: Protein OPG170 (219 aa).

The signal sequence occupies residues 1 to 16 (MYSLVFVILMCIPFSF). A glycan (N-linked (GlcNAc...) asparagine; by host) is linked at asparagine 70.

This sequence belongs to the orthopoxvirus OPG170 family.

The protein resides in the secreted. In terms of biological role, may interact with several cellular chemokines to interfere with chemokine-glycosaminoglycan (GAG) interactions at the cell surface to alter chemotaxis of nearby responsive cells. This is Protein OPG170 (OPG170) from Bos taurus (Bovine).